Consider the following 247-residue polypeptide: Trypsin-4 (247 aa).

The N-terminal stretch at 1–15 (MKISIFFAFLGAAVA) is a signal peptide. Residues 16–23 (LPVNDDDK) constitute a propeptide, activation peptide. The Peptidase S1 domain maps to 24-245 (IVGGYTCPKH…YLSWIQETMA (222 aa)). Disulfide bonds link cysteine 30-cysteine 161, cysteine 49-cysteine 65, cysteine 133-cysteine 234, cysteine 140-cysteine 207, cysteine 172-cysteine 186, and cysteine 197-cysteine 221. Histidine 64 functions as the Charge relay system in the catalytic mechanism. Ca(2+)-binding residues include glutamate 76, asparagine 78, valine 81, and glutamate 86. The active-site Charge relay system is the aspartate 108. Catalysis depends on serine 201, which acts as the Charge relay system.

This sequence belongs to the peptidase S1 family. It depends on Ca(2+) as a cofactor. Proteolytically cleaved and activated by an autocatalytic mechanism. Cleavage by CTRC inhibits autoactivation.

It localises to the secreted. The protein resides in the extracellular space. The catalysed reaction is Preferential cleavage: Arg-|-Xaa, Lys-|-Xaa.. Its activity is regulated as follows. Activated by autocatalytic cleavage. Cleavage by CTRC inhibits autoactivation. Its function is as follows. Serine protease capable of autoactivation. The chain is Trypsin-4 from Rattus norvegicus (Rat).